Here is a 695-residue protein sequence, read N- to C-terminus: Centrosomal protein of 89 kDa (695 aa).

3 disordered regions span residues 24 to 54 (LIPA…RPRS), 66 to 147 (TGRT…GDED), and 167 to 272 (AVPL…SEVL). Over residues 34 to 49 (PAVPRTPPPRSPNPSP) the composition is skewed to pro residues. Composition is skewed to acidic residues over residues 124-146 (DEDD…EGDE) and 178-189 (DSDVDEETEDSA). A compositionally biased stretch (polar residues) spans 209-226 (GQTQPSSLPQPRSVSRRS). Residues 251 to 271 (TNKESPVRVNERDRSSEDSEV) show a composition bias toward basic and acidic residues. 2 coiled-coil regions span residues 276–368 (LEVQ…RYQA) and 406–632 (AYED…LEKE).

It is found in the cytoplasm. It localises to the cytosol. The protein resides in the cytoskeleton. Its subcellular location is the microtubule organizing center. The protein localises to the centrosome. It is found in the spindle pole. It localises to the centriole. The protein resides in the mitochondrion intermembrane space. Required for ciliogenesis. Also plays a role in mitochondrial metabolism where it may modulate complex IV activity. In Danio rerio (Zebrafish), this protein is Centrosomal protein of 89 kDa (cep89).